Here is a 312-residue protein sequence, read N- to C-terminus: Olfactory receptor-like protein COR2 (312 aa).

Topologically, residues Met1 to Pro26 are extracellular. An N-linked (GlcNAc...) asparagine glycan is attached at Asn5. A helical transmembrane segment spans residues Leu27–Ile49. Residues Gly50–Thr57 are Cytoplasmic-facing. A helical membrane pass occupies residues Pro58 to Pro79. Over Lys80 to Gln100 the chain is Extracellular. Cys97 and Cys179 form a disulfide bridge. A helical transmembrane segment spans residues Tyr101–Tyr120. The Cytoplasmic segment spans residues Asp121 to Ala139. Residues Val140 to Leu164 traverse the membrane as a helical segment. The Extracellular portion of the chain corresponds to Lys165–Leu205. A helical membrane pass occupies residues Phe206–Val226. Residues Met227–Ser239 lie on the Cytoplasmic side of the membrane. The chain crosses the membrane as a helical span at residues Thr240–Leu260. Residues Arg261 to Asp271 lie on the Extracellular side of the membrane. The helical transmembrane segment at Lys272–Trp292 threads the bilayer. At Arg293 to His312 the chain is on the cytoplasmic side.

This sequence belongs to the G-protein coupled receptor 1 family.

The protein resides in the cell membrane. Odorant receptor. The sequence is that of Olfactory receptor-like protein COR2 (COR2) from Gallus gallus (Chicken).